A 338-amino-acid polypeptide reads, in one-letter code: Probable tRNA pseudouridine synthase B (338 aa).

Asp-78 functions as the Nucleophile in the catalytic mechanism. The region spanning 245–320 (LPKIILRDSA…IAASPIRVLM (76 aa)) is the PUA domain.

Belongs to the pseudouridine synthase TruB family. Type 2 subfamily.

The enzyme catalyses uridine(55) in tRNA = pseudouridine(55) in tRNA. Functionally, could be responsible for synthesis of pseudouridine from uracil-55 in the psi GC loop of transfer RNAs. The sequence is that of Probable tRNA pseudouridine synthase B from Methanosarcina acetivorans (strain ATCC 35395 / DSM 2834 / JCM 12185 / C2A).